The following is a 422-amino-acid chain: Serine--tRNA ligase (422 aa).

Residue 229–231 (TAE) coordinates L-serine. Residue 258 to 260 (RRE) coordinates ATP. L-serine is bound at residue glutamate 281. Residue 345–348 (EISS) participates in ATP binding. Serine 379 contacts L-serine.

This sequence belongs to the class-II aminoacyl-tRNA synthetase family. Type-1 seryl-tRNA synthetase subfamily. Homodimer. The tRNA molecule binds across the dimer.

Its subcellular location is the cytoplasm. It catalyses the reaction tRNA(Ser) + L-serine + ATP = L-seryl-tRNA(Ser) + AMP + diphosphate + H(+). The catalysed reaction is tRNA(Sec) + L-serine + ATP = L-seryl-tRNA(Sec) + AMP + diphosphate + H(+). The protein operates within aminoacyl-tRNA biosynthesis; selenocysteinyl-tRNA(Sec) biosynthesis; L-seryl-tRNA(Sec) from L-serine and tRNA(Sec): step 1/1. In terms of biological role, catalyzes the attachment of serine to tRNA(Ser). Is also able to aminoacylate tRNA(Sec) with serine, to form the misacylated tRNA L-seryl-tRNA(Sec), which will be further converted into selenocysteinyl-tRNA(Sec). The chain is Serine--tRNA ligase from Methanosarcina mazei (strain ATCC BAA-159 / DSM 3647 / Goe1 / Go1 / JCM 11833 / OCM 88) (Methanosarcina frisia).